Here is a 281-residue protein sequence, read N- to C-terminus: Cell division protein DivIB (281 aa).

The disordered stretch occupies residues 1–36 (MARKRITRRDPEEELSKFLRHEPGQGQETRKLSSQL). Residues 1 to 46 (MARKRITRRDPEEELSKFLRHEPGQGQETRKLSSQLTSLKKERRRG) are Cytoplasmic-facing. A compositionally biased stretch (basic and acidic residues) spans 8-31 (RRDPEEELSKFLRHEPGQGQETRK). Residues 47-69 (LLTRLGSIMAVCLLAIAFLTYYV) form a helical membrane-spanning segment. Over 70-281 (SPLADVSTVR…SAEKKAYGLS (212 aa)) the chain is Extracellular. The 72-residue stretch at 73–144 (ADVSTVRVLG…NTLNMQVHER (72 aa)) folds into the POTRA domain.

Belongs to the FtsQ/DivIB family. DivIB subfamily.

It is found in the cell membrane. Its function is as follows. Cell division protein that may be involved in stabilizing or promoting the assembly of the division complex. This chain is Cell division protein DivIB, found in Lactobacillus delbrueckii subsp. bulgaricus (strain ATCC 11842 / DSM 20081 / BCRC 10696 / JCM 1002 / NBRC 13953 / NCIMB 11778 / NCTC 12712 / WDCM 00102 / Lb 14).